Reading from the N-terminus, the 102-residue chain is MAPRRISVSETCRPVLPRHARLKFDDTRQRWVILAPERVLAPDEIAVEILQLCDGACDVAAIIDALAAKYTADRAEIGRDVMAMLQDLADKGFLTEARETAP.

This sequence belongs to the PqqD family. Monomer. Interacts with PqqE.

It functions in the pathway cofactor biosynthesis; pyrroloquinoline quinone biosynthesis. Its function is as follows. Functions as a PqqA binding protein and presents PqqA to PqqE, in the pyrroloquinoline quinone (PQQ) biosynthetic pathway. This Rhodopseudomonas palustris (strain ATCC BAA-98 / CGA009) protein is PqqA binding protein.